We begin with the raw amino-acid sequence, 317 residues long: tRNA dimethylallyltransferase (317 aa).

19–26 (GPTASGKS) is a binding site for ATP. 21 to 26 (TASGKS) is a binding site for substrate. Residues 44 to 47 (DSMQ) are interaction with substrate tRNA.

Belongs to the IPP transferase family. As to quaternary structure, monomer. Mg(2+) serves as cofactor.

The catalysed reaction is adenosine(37) in tRNA + dimethylallyl diphosphate = N(6)-dimethylallyladenosine(37) in tRNA + diphosphate. Its function is as follows. Catalyzes the transfer of a dimethylallyl group onto the adenine at position 37 in tRNAs that read codons beginning with uridine, leading to the formation of N6-(dimethylallyl)adenosine (i(6)A). The polypeptide is tRNA dimethylallyltransferase (Methylorubrum extorquens (strain CM4 / NCIMB 13688) (Methylobacterium extorquens)).